A 488-amino-acid chain; its full sequence is Ribulose bisphosphate carboxylase large chain (488 aa).

Asparagine 127 and threonine 177 together coordinate substrate. Lysine 179 acts as the Proton acceptor in catalysis. A substrate-binding site is contributed by lysine 181. Residues lysine 205, aspartate 207, and glutamate 208 each coordinate Mg(2+). Lysine 205 carries the N6-carboxylysine modification. Catalysis depends on histidine 297, which acts as the Proton acceptor. Substrate-binding residues include arginine 298, histidine 330, and serine 382.

It belongs to the RuBisCO large chain family. Type I subfamily. In terms of assembly, heterohexadecamer of 8 large chains and 8 small chains. Mg(2+) serves as cofactor.

It localises to the plastid. The protein localises to the chloroplast. It catalyses the reaction 2 (2R)-3-phosphoglycerate + 2 H(+) = D-ribulose 1,5-bisphosphate + CO2 + H2O. The catalysed reaction is D-ribulose 1,5-bisphosphate + O2 = 2-phosphoglycolate + (2R)-3-phosphoglycerate + 2 H(+). Functionally, ruBisCO catalyzes two reactions: the carboxylation of D-ribulose 1,5-bisphosphate, the primary event in carbon dioxide fixation, as well as the oxidative fragmentation of the pentose substrate in the photorespiration process. Both reactions occur simultaneously and in competition at the same active site. This chain is Ribulose bisphosphate carboxylase large chain, found in Pylaiella littoralis (Seaweed).